A 247-amino-acid polypeptide reads, in one-letter code: Particulate methane monooxygenase beta subunit (247 aa).

A run of 6 helical transmembrane segments spans residues 23–43, 59–79, 86–106, 111–131, 145–165, and 215–235; these read WMALFVVFFVIVGSYHIHAML, LWVTVTPIVLVTFPAAVQSYL, PWGATVCVLGLLLGEWINRYF, WTYFPINFVFPASLVPGAIIL, AIVGAMGWGLIFYPGNWPIIA, and VSAFFSAFMSILIYFMWHFIG.

As to quaternary structure, m.capsulatus has two forms of methane monooxygenase, a soluble (sMMO) and a membrane-bound (particulate) type (pMMO). The particulate type is a nonamer composed of three alpha:beta:gamma heterotrimeric protomers assembled into a cylindrical structure; the beta and gamma subunits comprise the bulk of the membrane-spanning regions and the soluble regions are derived primarily from alpha subunits which form two antiparallel beta-barrel-like structures each. This assembly, also called pMMO hydroxylase (pMMO-H), is proposed to associate with methanol dehydrogenase (MDH), also designated as pMMO-R, to form the pMMO-C complex which seems to have greater methane monooxygenase activity.

Its subcellular location is the membrane. It carries out the reaction methane + a quinol + O2 = methanol + a quinone + H2O. Functionally, non-catalytic subunit of the methane monooxygenase that is responsible for the initial oxygenation of methane to methanol in methanotrophs. At least in vitro, specific quinols can replace NADH as reductants. The polypeptide is Particulate methane monooxygenase beta subunit (pmoA1) (Methylococcus capsulatus (strain ATCC 33009 / NCIMB 11132 / Bath)).